The primary structure comprises 345 residues: Dihydroorotate dehydrogenase (quinone) (345 aa).

Residues 65–69 (AGLDK) and threonine 89 contribute to the FMN site. Residue lysine 69 participates in substrate binding. Position 114-118 (114-118 (NRMGF)) interacts with substrate. The FMN site is built by asparagine 142 and asparagine 175. Asparagine 175 contributes to the substrate binding site. Serine 178 serves as the catalytic Nucleophile. Asparagine 180 provides a ligand contact to substrate. Residues lysine 220 and threonine 248 each coordinate FMN. 249 to 250 (NT) is a substrate binding site. FMN is bound by residues glycine 271, glycine 300, and 321–322 (YT).

The protein belongs to the dihydroorotate dehydrogenase family. Type 2 subfamily. In terms of assembly, monomer. Requires FMN as cofactor.

The protein resides in the cell membrane. The enzyme catalyses (S)-dihydroorotate + a quinone = orotate + a quinol. It participates in pyrimidine metabolism; UMP biosynthesis via de novo pathway; orotate from (S)-dihydroorotate (quinone route): step 1/1. Its function is as follows. Catalyzes the conversion of dihydroorotate to orotate with quinone as electron acceptor. This chain is Dihydroorotate dehydrogenase (quinone), found in Burkholderia cenocepacia (strain ATCC BAA-245 / DSM 16553 / LMG 16656 / NCTC 13227 / J2315 / CF5610) (Burkholderia cepacia (strain J2315)).